Reading from the N-terminus, the 626-residue chain is Chaperone protein HtpG (626 aa).

The segment at 1 to 339 (MSTNQETRGF…SNDLPLNVSR (339 aa)) is a; substrate-binding. Residues 340–555 (EILQDNKVTA…NDQMTTQMAK (216 aa)) form a b region. A c region spans residues 556–626 (LFAAAGQPVP…FIKRINKLLG (71 aa)).

This sequence belongs to the heat shock protein 90 family. As to quaternary structure, homodimer.

Its subcellular location is the cytoplasm. Functionally, molecular chaperone. Has ATPase activity. This Aggregatibacter actinomycetemcomitans (Actinobacillus actinomycetemcomitans) protein is Chaperone protein HtpG.